Here is a 740-residue protein sequence, read N- to C-terminus: Phosphoribosylformylglycinamidine synthase subunit PurL (740 aa).

H54 is an active-site residue. ATP-binding residues include Y57 and K96. E98 is a Mg(2+) binding site. Substrate is bound by residues 99–102 (SHNH) and R121. H100 functions as the Proton acceptor in the catalytic mechanism. D122 serves as a coordination point for Mg(2+). Residue Q245 participates in substrate binding. Position 273 (D273) interacts with Mg(2+). Substrate is bound at residue 317–319 (ESQ). Residues D499 and G536 each contribute to the ATP site. N537 contacts Mg(2+). Residue S539 participates in substrate binding.

It belongs to the FGAMS family. As to quaternary structure, monomer. Part of the FGAM synthase complex composed of 1 PurL, 1 PurQ and 2 PurS subunits.

The protein localises to the cytoplasm. It catalyses the reaction N(2)-formyl-N(1)-(5-phospho-beta-D-ribosyl)glycinamide + L-glutamine + ATP + H2O = 2-formamido-N(1)-(5-O-phospho-beta-D-ribosyl)acetamidine + L-glutamate + ADP + phosphate + H(+). The protein operates within purine metabolism; IMP biosynthesis via de novo pathway; 5-amino-1-(5-phospho-D-ribosyl)imidazole from N(2)-formyl-N(1)-(5-phospho-D-ribosyl)glycinamide: step 1/2. In terms of biological role, part of the phosphoribosylformylglycinamidine synthase complex involved in the purines biosynthetic pathway. Catalyzes the ATP-dependent conversion of formylglycinamide ribonucleotide (FGAR) and glutamine to yield formylglycinamidine ribonucleotide (FGAM) and glutamate. The FGAM synthase complex is composed of three subunits. PurQ produces an ammonia molecule by converting glutamine to glutamate. PurL transfers the ammonia molecule to FGAR to form FGAM in an ATP-dependent manner. PurS interacts with PurQ and PurL and is thought to assist in the transfer of the ammonia molecule from PurQ to PurL. In Anoxybacillus flavithermus (strain DSM 21510 / WK1), this protein is Phosphoribosylformylglycinamidine synthase subunit PurL.